The following is a 186-amino-acid chain: Alkyl hydroperoxide reductase AhpD (186 aa).

Residue C132 is the Proton donor of the active site. C132 and C135 are oxidised to a cystine. The Cysteine sulfenic acid (-SOH) intermediate role is filled by C135.

The protein belongs to the AhpD family.

The enzyme catalyses N(6)-[(R)-dihydrolipoyl]-L-lysyl-[lipoyl-carrier protein] + a hydroperoxide = N(6)-[(R)-lipoyl]-L-lysyl-[lipoyl-carrier protein] + an alcohol + H2O. Its function is as follows. Antioxidant protein with alkyl hydroperoxidase activity. Required for the reduction of the AhpC active site cysteine residues and for the regeneration of the AhpC enzyme activity. The polypeptide is Alkyl hydroperoxide reductase AhpD (Anaeromyxobacter dehalogenans (strain 2CP-C)).